Consider the following 356-residue polypeptide: tRNA (guanine(26)-N(2))-dimethyltransferase (356 aa).

Residues 5–352 (VLRREGTVEF…VSAGEVERVL (348 aa)) enclose the Trm1 methyltransferase domain. The S-adenosyl-L-methionine site is built by R40, R67, D85, D111, and A112.

It belongs to the class I-like SAM-binding methyltransferase superfamily. Trm1 family.

It catalyses the reaction guanosine(26) in tRNA + 2 S-adenosyl-L-methionine = N(2)-dimethylguanosine(26) in tRNA + 2 S-adenosyl-L-homocysteine + 2 H(+). Functionally, dimethylates a single guanine residue at position 26 of a number of tRNAs using S-adenosyl-L-methionine as donor of the methyl groups. In Pyrobaculum arsenaticum (strain DSM 13514 / JCM 11321 / PZ6), this protein is tRNA (guanine(26)-N(2))-dimethyltransferase.